The primary structure comprises 319 residues: Cytochrome c biogenesis protein CcsA (319 aa).

Helical transmembrane passes span 17–37, 44–64, 68–88, 143–163, 223–243, 257–271, and 286–306; these read TISI…LGGL, GMIV…ASSG, LSNL…LHTI, MLLS…ILII, VISL…VWAN, TWAF…IYLH, and VASI…LLGI.

The protein belongs to the CcmF/CycK/Ccl1/NrfE/CcsA family. In terms of assembly, may interact with Ccs1.

It localises to the plastid. It is found in the chloroplast thylakoid membrane. Functionally, required during biogenesis of c-type cytochromes (cytochrome c6 and cytochrome f) at the step of heme attachment. This is Cytochrome c biogenesis protein CcsA from Lolium perenne (Perennial ryegrass).